The sequence spans 371 residues: ETS-related transcription factor Elf-3 (371 aa).

One can recognise a PNT domain in the interval 46–132 (NPQMSLEGTE…AQLRDLTSSS (87 aa)). A 9aaTAD motif is present at residues 137–145 (SWIIELLEK). Positions 173-251 (GQQASPYHPG…HGKRKRGRPR (79 aa)) are disordered. Residues 181–216 (PGSCGAGAPSPGSSDVSTAGTGASRSSHSSDSGGSD) are compositionally biased toward low complexity. Over residues 231–241 (GFRDCKKGDPK) the composition is skewed to basic and acidic residues. Positions 242-251 (HGKRKRGRPR) are enriched in basic residues. Residues 273 to 355 (THLWEFIRDI…DGRRLVYKFG (83 aa)) constitute a DNA-binding region (ETS).

It belongs to the ETS family. In terms of assembly, interacts with TBP. Interacts with CREBBP and EP300; these act as transcriptional coactivators of ELF3 and positively modulate its function. Interacts with XRCC5/KU86 and XRCC6/KU70; these inhibit the ability of ELF3 to bind DNA and negatively modulate its transcriptional activity. Associated with CLND7 and POU2F3. Interacts with ZNF768. Expressed exclusively in tissues containing a high content of terminally differentiated epithelial cells including mammary gland, colon, trachea, kidney, prostate, uterus, stomach and skin.

The protein localises to the cytoplasm. Its subcellular location is the nucleus. Its function is as follows. Transcriptional activator that binds and transactivates ETS sequences containing the consensus nucleotide core sequence GGA[AT]. Acts synergistically with POU2F3 to transactivate the SPRR2A promoter and with RUNX1 to transactivate the ANGPT1 promoter. Also transactivates collagenase, CCL20, CLND7, FLG, KRT8, NOS2, PTGS2, SPRR2B, TGFBR2 and TGM3 promoters. Represses KRT4 promoter activity. Involved in mediating vascular inflammation. May play an important role in epithelial cell differentiation and tumorigenesis. May be a critical downstream effector of the ERBB2 signaling pathway. May be associated with mammary gland development and involution. Plays an important role in the regulation of transcription with TATA-less promoters in preimplantation embryos, which is essential in preimplantation development. This chain is ETS-related transcription factor Elf-3, found in Homo sapiens (Human).